A 172-amino-acid chain; its full sequence is MEYFNVGKIVNTQGLQGEMRVLSVSDFAEERFKKGSQLALFDDKDQFVQEVTIVSHRKQKHFDIIKLKDMYHINAIEKYKGYTLKVSKANQGDLQEGEFYYHQIIGMAVYEKDRLIGYVKEILQPGANDVWVVKRQGKRDLLLPYIPPVVLNVDVPNKRVDVELMEGLDDED.

One can recognise a PRC barrel domain in the interval 96 to 168 (EGEFYYHQII…RVDVELMEGL (73 aa)).

Belongs to the RimM family. In terms of assembly, binds ribosomal protein uS19.

Its subcellular location is the cytoplasm. Its function is as follows. An accessory protein needed during the final step in the assembly of 30S ribosomal subunit, possibly for assembly of the head region. Essential for efficient processing of 16S rRNA. May be needed both before and after RbfA during the maturation of 16S rRNA. It has affinity for free ribosomal 30S subunits but not for 70S ribosomes. The polypeptide is Ribosome maturation factor RimM (Streptococcus pyogenes serotype M28 (strain MGAS6180)).